The following is a 421-amino-acid chain: MGKATLAVFADSDSSNMNESFAHLHFAGGYLPSDSKGWRTIIPSLLAAVCLVGFVGNLCVIGLLLHGVWKRKPSMIHSLILNLSLADISLLLFSAPVRATAYVKGVWDLGWFVCKSSDWFTHMCMAAKSLTFVVVAKVCFMYASDPAKPVGTHNCTIWSLLGAIWVVASLLPLPEWFFSTTRHHAGVEMCLVDVPAVAAEFMSLFGKLYPLLVFCLPLLLAGFYFWRAYNQCKIRCAKTQNLRNQMRSKQLTVMLLSTAVTSALLWLPEWIAWLWVWHLKAGGPMPPQGFIALSQVLMFSISTVNPLIFLMMSEEFKAGLKGIWKWMITRKPVVTSEVQEVPAGNIETLPGKAPSPETQTCIPDTDRCGSPDSSKETTDKVMVPILPDVEQFWHERDVGPSAQDNDPIPWEHEGQETKGCN.

The Extracellular segment spans residues 1–44 (MGKATLAVFADSDSSNMNESFAHLHFAGGYLPSDSKGWRTIIPS). Residue N18 is glycosylated (N-linked (GlcNAc...) asparagine). The chain crosses the membrane as a helical span at residues 45–65 (LLAAVCLVGFVGNLCVIGLLL). Over 66–74 (HGVWKRKPS) the chain is Cytoplasmic. The chain crosses the membrane as a helical span at residues 75–95 (MIHSLILNLSLADISLLLFSA). At 96–122 (PVRATAYVKGVWDLGWFVCKSSDWFTH) the chain is on the extracellular side. An intrachain disulfide couples C114 to C190. The chain crosses the membrane as a helical span at residues 123 to 143 (MCMAAKSLTFVVVAKVCFMYA). Residues 144 to 156 (SDPAKPVGTHNCT) lie on the Cytoplasmic side of the membrane. A helical membrane pass occupies residues 157–177 (IWSLLGAIWVVASLLPLPEWF). The Extracellular segment spans residues 178–204 (FSTTRHHAGVEMCLVDVPAVAAEFMSL). A helical transmembrane segment spans residues 205–225 (FGKLYPLLVFCLPLLLAGFYF). Residues 226–258 (WRAYNQCKIRCAKTQNLRNQMRSKQLTVMLLST) lie on the Cytoplasmic side of the membrane. Residues 259–279 (AVTSALLWLPEWIAWLWVWHL) form a helical membrane-spanning segment. Over 280 to 289 (KAGGPMPPQG) the chain is Extracellular. Residues 290–310 (FIALSQVLMFSISTVNPLIFL) form a helical membrane-spanning segment. At 311-421 (MMSEEFKAGL…HEGQETKGCN (111 aa)) the chain is on the cytoplasmic side. 2 disordered regions span residues 346 to 381 (IETL…TDKV) and 394 to 421 (HERD…KGCN). Composition is skewed to basic and acidic residues over residues 364–379 (DTDR…ETTD) and 409–421 (PWEH…KGCN).

It belongs to the G-protein coupled receptor 1 family. As to expression, exclusively expressed in neurons of the habenular complex. The expression is particularly prominent in the medial habenular nucleus, whereas the lateral habenular nucleus exhibited a lower level of expression.

It is found in the cell membrane. Orphan receptor. The protein is Probable G-protein coupled receptor 151 (Gpr151) of Rattus norvegicus (Rat).